The sequence spans 203 residues: Glycerol-3-phosphate acyltransferase (203 aa).

Transmembrane regions (helical) follow at residues 3 to 23 (LASALVLGAYLLGSVSTAILV), 75 to 95 (LGLEPVWIAAVALAAFLGHLF), 113 to 133 (VILGIQAWVGLAALATWLIVA), and 156 to 176 (LLTGERWYVAAGVLLAALIYW).

The protein belongs to the PlsY family. As to quaternary structure, probably interacts with PlsX.

It localises to the cell inner membrane. It catalyses the reaction an acyl phosphate + sn-glycerol 3-phosphate = a 1-acyl-sn-glycero-3-phosphate + phosphate. The protein operates within lipid metabolism; phospholipid metabolism. In terms of biological role, catalyzes the transfer of an acyl group from acyl-phosphate (acyl-PO(4)) to glycerol-3-phosphate (G3P) to form lysophosphatidic acid (LPA). This enzyme utilizes acyl-phosphate as fatty acyl donor, but not acyl-CoA or acyl-ACP. This is Glycerol-3-phosphate acyltransferase from Thioalkalivibrio sulfidiphilus (strain HL-EbGR7).